A 519-amino-acid chain; its full sequence is Cilia- and flagella-associated protein 157 (519 aa).

A compositionally biased stretch (basic residues) spans 1–11 (MPPKKKGKRGP). The segment at 1–25 (MPPKKKGKRGPSAKTKEKETVRVAS) is disordered. Coiled-coil stretches lie at residues 28–185 (VTEQ…EKKV) and 241–356 (IELI…QRTL).

It belongs to the CFAP157 family.

It is found in the cytoplasm. The protein localises to the cytoskeleton. The protein resides in the cilium basal body. Specifically required during spermatogenesis for flagellum morphogenesis and sperm motility. This is Cilia- and flagella-associated protein 157 from Xenopus tropicalis (Western clawed frog).